Reading from the N-terminus, the 422-residue chain is Synaptotagmin-15 (422 aa).

The Extracellular segment spans residues 1–4 (MAEQ). A helical; Signal-anchor for type III membrane protein membrane pass occupies residues 5–27 (LALVIGCIIGGLLLLIGISCCLW). Over 28 to 422 (KRLCTTFTYE…WHALCRPMEP (395 aa)) the chain is Cytoplasmic. 2 C2 domains span residues 148–267 (CLGR…VIWR) and 279–400 (EFGD…EHWN).

Belongs to the synaptotagmin family. As to quaternary structure, homodimer.

It is found in the membrane. Functionally, may be involved in the trafficking and exocytosis of secretory vesicles in non-neuronal tissues. The sequence is that of Synaptotagmin-15 (Syt15) from Rattus norvegicus (Rat).